The chain runs to 432 residues: MSAKTNPEVIKESSMVKQKEMIAGNYDRLTGTKESGEKVVSTFVPGNLNELIMCFDMVNNLPETNAIQNGMRKQSGGMIMDAEKAGHSEDVCTYVKADIGMMGRGNIAPNGKPMPAPDMLLLSYTGCFTFMKWFELLRHEYKCPTVMLQIPYQGDGKITKNMRDFVVKQLKEEVIPMFEQVSGVKFDIDRLREYLKNSAKAEDDLVWVLESAKNRPSPIDAYFGGVYYIGPMFTAFRGTADAVEYYGLLRGEIEQRIREGKGPITPEGDMKEEKYRLVVEGPPNWTSFREFWKLFYDEGAVVVASSYTKVGGLYDQGFRHDPNDPLGTLADYCLGCYTNNNLPQRVELLEKYMNEYQADGLLINSIKSCNSFSAGQLLMMREIEKRTGKPAAFIETDLVDPRYFSHANVKNRLESYFQMVDQKRSGASLATA.

It belongs to the FldB/FldC dehydratase alpha/beta subunit family. As to quaternary structure, heterotetramer composed of A, B, C, and D subunits. Requires iron-sulfur cluster as cofactor. It depends on an oxidized flavin as a cofactor.

It catalyses the reaction cyclohexa-1,5-diene-1-carbonyl-CoA + oxidized 2[4Fe-4S]-[ferredoxin] + 2 ADP + 2 phosphate = reduced 2[4Fe-4S]-[ferredoxin] + benzoyl-CoA + 2 ATP + 2 H2O. It carries out the reaction 3-hydroxybenzoyl-CoA + AH2 + 2 ATP + 2 H2O = 3-hydroxycyclohexa-1,5-diene-1-carbonyl-CoA + A + 2 ADP + 2 phosphate + 2 H(+). In terms of biological role, catalyzes the anaerobic reduction of benzoyl-CoA and 3-hydroxybenzoyl-CoA to form cyclohexa-1,5-diene-1-carbonyl-CoA and 3-hydroxycyclohexa-1,5-diene-1-carbonyl-CoA, respectively. The enzyme also reduces other benzoyl-CoA analogs with small substituents at the aromatic ring. This is Benzoyl-CoA reductase subunit B (bcrB) from Thauera aromatica.